The primary structure comprises 255 residues: Putative deoxyribonuclease tatdn3-B (255 aa).

6 residues coordinate Zn(2+): H11, H13, E106, H129, H152, and D199.

The protein belongs to the metallo-dependent hydrolases superfamily. TatD-type hydrolase family. The cofactor is Mn(2+). Ca(2+) is required as a cofactor. Mg(2+) serves as cofactor. Requires Zn(2+) as cofactor.

It is found in the nucleus. With respect to regulation, the 3'-exonuclease activity is sensitive to the metal ion present in the active site, whereas the AP endodeoxyribonuclease activity is observed in a variety of divalent metal cofactors. 3'-exoxonuclease activity is suppressed in the presence of Ca(2+), Zn(2+) and Ni(2+). Its function is as follows. Exhibits 3'-exonuclease activities and apurinic/apyrimidinic (AP) endonuclease (in vitro). Show preferential AP endonuclease activity on double-stranded DNA substrates and 3'- exonuclease activity on single-stranded DNA. In Xenopus laevis (African clawed frog), this protein is Putative deoxyribonuclease tatdn3-B (tatdn3-b).